Consider the following 456-residue polypeptide: Perilipin-5 (456 aa).

Residues 1–20 form a disordered region; sequence MSEDEAAQAPGPSLSEQDQQ. The segment at 1 to 108 is interaction with LIPE; that stretch reads MSEDEAAQAP…KLEEKLPFLQ (108 aa). Residues 1–173 are essential for lipid droplet targeting; that stretch reads MSEDEAAQAP…HFLPMTEEEL (173 aa). Phosphoserine occurs at positions 2, 148, and 324. An interaction with PNPLA2 and ABHD5 region spans residues 185–456; it reads VGSVEEQRKH…KHTLMPELDF (272 aa). Residues 420 to 456 are disordered; the sequence is AWQAQHGEGTVLSGNIPEEEPEPPSRPKHTLMPELDF. The segment at 438–456 is recruits mitochondria at the lipid droplet surface; it reads EEPEPPSRPKHTLMPELDF.

This sequence belongs to the perilipin family. Homooligomer. Interacts with PNPLA2; prevents interaction of PNPLA2 with ABHD5. Interacts with ABHD5; targets ABHD5 to lipid droplets and promotes interaction of ABHD5 with PNPLA2. Interacts with LIPE. Phosphorylated by PKA. Phosphorylated on serine in skeletal muscle at rest or upon lipolytic stimulation.

It is found in the lipid droplet. It localises to the cytoplasm. Its subcellular location is the mitochondrion. Lipid droplet-associated protein that maintains the balance between lipogenesis and lipolysis and also regulates fatty acid oxidation in oxidative tissues. Recruits mitochondria to the surface of lipid droplets and is involved in lipid droplet homeostasis by regulating both the storage of fatty acids in the form of triglycerides and the release of fatty acids for mitochondrial fatty acid oxidation. In lipid droplet triacylglycerol hydrolysis, plays a role as a scaffolding protein for three major key lipolytic players: ABHD5, PNPLA2 and LIPE. Reduces the triacylglycerol hydrolase activity of PNPLA2 by recruiting and sequestering PNPLA2 to lipid droplets. Phosphorylation by PKA enables lipolysis probably by promoting release of ABHD5 from the perilipin scaffold and by facilitating interaction of ABHD5 with PNPLA2. Also increases lipolysis through interaction with LIPE and upon PKA-mediated phosphorylation of LIPE. The sequence is that of Perilipin-5 (Plin5) from Ovis aries (Sheep).